We begin with the raw amino-acid sequence, 59 residues long: Chromatin protein Cren7 (59 aa).

The protein belongs to the Cren7 family. As to quaternary structure, monomer. Post-translationally, methylated at multiple sites, to varying extents.

It localises to the chromosome. The protein localises to the cytoplasm. Functionally, a chromatin protein, binds double-stranded DNA without sequence specificity. Constrains negative DNA supercoils. The sequence is that of Chromatin protein Cren7 from Pyrobaculum neutrophilum (strain DSM 2338 / JCM 9278 / NBRC 100436 / V24Sta) (Thermoproteus neutrophilus).